The primary structure comprises 400 residues: Cysteine desulfurase 1 (400 aa).

Pyridoxal 5'-phosphate contacts are provided by residues 71-72 (GT), N150, Q178, and 198-200 (SGH). K201 is subject to N6-(pyridoxal phosphate)lysine. Pyridoxal 5'-phosphate is bound at residue T236. C324 (cysteine persulfide intermediate) is an active-site residue. C324 serves as a coordination point for [2Fe-2S] cluster.

This sequence belongs to the class-V pyridoxal-phosphate-dependent aminotransferase family. NifS/IscS subfamily. Homodimer. Requires pyridoxal 5'-phosphate as cofactor.

The catalysed reaction is (sulfur carrier)-H + L-cysteine = (sulfur carrier)-SH + L-alanine. In terms of biological role, catalyzes the removal of elemental sulfur atoms from cysteine to produce alanine. Seems to participate in the biosynthesis of the nitrogenase metalloclusters by providing the inorganic sulfur required for the Fe-S core formation. The polypeptide is Cysteine desulfurase 1 (Trichormus variabilis (strain ATCC 29413 / PCC 7937) (Anabaena variabilis)).